The sequence spans 255 residues: Type III pantothenate kinase (255 aa).

6 to 13 (DIGNTNTV) is an ATP binding site. Residues tyrosine 100 and 107–110 (GADR) each bind substrate. Aspartate 109 (proton acceptor) is an active-site residue. Residue aspartate 129 coordinates K(+). Residue threonine 132 coordinates ATP. Threonine 185 lines the substrate pocket.

It belongs to the type III pantothenate kinase family. As to quaternary structure, homodimer. NH4(+) is required as a cofactor. Requires K(+) as cofactor.

Its subcellular location is the cytoplasm. It carries out the reaction (R)-pantothenate + ATP = (R)-4'-phosphopantothenate + ADP + H(+). Its pathway is cofactor biosynthesis; coenzyme A biosynthesis; CoA from (R)-pantothenate: step 1/5. Its function is as follows. Catalyzes the phosphorylation of pantothenate (Pan), the first step in CoA biosynthesis. This Desulfosudis oleivorans (strain DSM 6200 / JCM 39069 / Hxd3) (Desulfococcus oleovorans) protein is Type III pantothenate kinase.